The chain runs to 113 residues: Large ribosomal subunit protein P1z (113 aa).

The tract at residues 87–113 (AAAPAKEEKKDEPAEESDGDLGFGLFD) is disordered. Phosphoserine is present on Ser-103.

The protein belongs to the eukaryotic ribosomal protein P1/P2 family. In terms of assembly, P1 and P2 exist as dimers at the large ribosomal subunit.

In terms of biological role, plays an important role in the elongation step of protein synthesis. This Arabidopsis thaliana (Mouse-ear cress) protein is Large ribosomal subunit protein P1z (RPP1B).